Reading from the N-terminus, the 636-residue chain is Protein meg-1 (636 aa).

Composition is skewed to polar residues over residues 1–13 (MDNRGHFSSNGNF), 38–54 (SSGNMRSIGGSAQNQQQ), and 292–355 (LSMN…QYNH). Disordered regions lie at residues 1-54 (MDNR…NQQQ), 289-367 (LFNL…APHL), 484-504 (SDVAREDASTSQPSKSRSMYI), and 521-542 (LDSSQSHAGPVPAASTKPKTPS). S574 carries the phosphoserine; by mbk-2 modification. A disordered region spans residues 591 to 636 (MSQSFLHQQDDEAPDCTKNVHSESDLKQAEPQESDKQSDKELPSNE). The span at 608–636 (KNVHSESDLKQAEPQESDKQSDKELPSNE) shows a compositional bias: basic and acidic residues.

Interacts with pptr-1, pptr-2 and pgl-1. In terms of processing, phosphorylated by mbk-2, which promotes the disassembly of zygotic P granules in the anterior cytoplasm of pre-gastrulation embryos. Dephosphorylated by a phosphatase complex containing the PP2A regulatory subunit pptr-1, which promotes the assembly and accumulation of zygotic P granules in the posterior cytoplasm of pre-gastrulation embryos. As to expression, not expressed in the adult germline or in any somatic tissues.

Its subcellular location is the cytoplasmic granule. Its function is as follows. P granule component, which acts redundantly with P granule component meg-2 to promote P granule segregation during embryogenesis, and germ cell proliferation and differentiation in larval stages. In its phosphorylated form, and together with meg-2, promotes the disassembly of zygotic P granules in the anterior cytoplasm of pre-gastrulation embryos. In its dephosphorylated form, and together with meg-2, promotes the assembly and accumulation of zygotic P granules in the posterior cytoplasm of pre-gastrulation embryos. May function with the nanos family members nos-2 and nos-3 to promote germ cell proliferation during larval development. Required for fertility. This is Protein meg-1 from Caenorhabditis elegans.